The sequence spans 331 residues: Tetraacyldisaccharide 4'-kinase (331 aa).

60–67 (TIGGTGKT) is a binding site for ATP.

It belongs to the LpxK family.

It catalyses the reaction a lipid A disaccharide + ATP = a lipid IVA + ADP + H(+). It functions in the pathway glycolipid biosynthesis; lipid IV(A) biosynthesis; lipid IV(A) from (3R)-3-hydroxytetradecanoyl-[acyl-carrier-protein] and UDP-N-acetyl-alpha-D-glucosamine: step 6/6. Transfers the gamma-phosphate of ATP to the 4'-position of a tetraacyldisaccharide 1-phosphate intermediate (termed DS-1-P) to form tetraacyldisaccharide 1,4'-bis-phosphate (lipid IVA). This is Tetraacyldisaccharide 4'-kinase from Pseudomonas syringae pv. tomato (strain ATCC BAA-871 / DC3000).